Reading from the N-terminus, the 144-residue chain is Small ribosomal subunit protein bS16 (144 aa).

Positions 115–144 (NEPVAEAVTPKKKAKKDDAAAESTEAEAAE) are disordered.

This sequence belongs to the bacterial ribosomal protein bS16 family.

The polypeptide is Small ribosomal subunit protein bS16 (Nocardia farcinica (strain IFM 10152)).